The chain runs to 446 residues: Probable inactive lipase MT1628 (446 aa).

It belongs to the AB hydrolase superfamily. Lipase family.

The chain is Probable inactive lipase MT1628 from Mycobacterium tuberculosis (strain CDC 1551 / Oshkosh).